We begin with the raw amino-acid sequence, 1615 residues long: Ferredoxin-dependent glutamate synthase, chloroplastic (1615 aa).

The N-terminal 52 residues, methionine 1–leucine 52, are a transit peptide targeting the chloroplast. Cysteine 97 (nucleophile) is an active-site residue. Residues cysteine 97 to glutamine 496 form the Glutamine amidotransferase type-2 domain. Leucine 1175–arginine 1232 provides a ligand contact to FMN. The [3Fe-4S] cluster site is built by cysteine 1228, cysteine 1234, and cysteine 1239.

Belongs to the glutamate synthase family. It depends on [3Fe-4S] cluster as a cofactor. The cofactor is FAD. FMN is required as a cofactor. Expressed in leaf blades and at lower levels in roots.

It is found in the plastid. The protein localises to the chloroplast. It carries out the reaction 2 oxidized [2Fe-2S]-[ferredoxin] + 2 L-glutamate = L-glutamine + 2 reduced [2Fe-2S]-[ferredoxin] + 2-oxoglutarate + 2 H(+). It functions in the pathway amino-acid biosynthesis; L-glutamate biosynthesis via GLT pathway; L-glutamate from 2-oxoglutarate and L-glutamine (ferredoxin route): step 1/1. The protein operates within energy metabolism; nitrogen metabolism. Functionally, involved in glutamate biosynthesis in leaf. Required for the reassimilation of ammonium ions generated during photorespiration. In Oryza sativa subsp. japonica (Rice), this protein is Ferredoxin-dependent glutamate synthase, chloroplastic (GLU).